Consider the following 131-residue polypeptide: Large ribosomal subunit protein bL17 (131 aa).

This sequence belongs to the bacterial ribosomal protein bL17 family. As to quaternary structure, part of the 50S ribosomal subunit. Contacts protein L32.

The polypeptide is Large ribosomal subunit protein bL17 (Methylobacillus flagellatus (strain ATCC 51484 / DSM 6875 / VKM B-1610 / KT)).